The chain runs to 218 residues: Mitochondrial fission factor (218 aa).

The Cytoplasmic segment spans residues 1 to 198 (MAEISRIQYE…ENKERAKREM (198 aa)). Residue threonine 89 is modified to Phosphothreonine. A phosphoserine mark is found at serine 129, serine 131, serine 146, and serine 171. Positions 167-198 (VDAASLRRQIIKLNRRLQLLEEENKERAKREM) form a coiled coil. A helical; Anchor for type IV membrane protein transmembrane segment spans residues 199 to 216 (VMYSITVAFWLLNSWLWF). The Mitochondrial intermembrane segment spans residues 217-218 (RR).

This sequence belongs to the Tango11 family. Homodimer. Interacts with DNM1L. Interacts with C11orf65/MFI; the interaction inhibits MFF interaction with DNM1L.

Its subcellular location is the mitochondrion outer membrane. It localises to the peroxisome. It is found in the cytoplasmic vesicle. The protein resides in the secretory vesicle. The protein localises to the synaptic vesicle. Its function is as follows. Plays a role in mitochondrial and peroxisomal fission. Promotes the recruitment and association of the fission mediator dynamin-related protein 1 (DNM1L) to the mitochondrial surface. May be involved in regulation of synaptic vesicle membrane dynamics by recruitment of DNM1L to clathrin-containing vesicles. The sequence is that of Mitochondrial fission factor (Mff) from Rattus norvegicus (Rat).